The chain runs to 226 residues: Large ribosomal subunit protein uL3 (226 aa).

Residues 135–158 form a disordered region; that stretch reads MSSQRASHGNSRSHNVPGSIGMAQ. Residues 137 to 150 show a composition bias toward polar residues; it reads SQRASHGNSRSHNV. N5-methylglutamine is present on Q158.

Belongs to the universal ribosomal protein uL3 family. In terms of assembly, part of the 50S ribosomal subunit. Forms a cluster with proteins L14 and L19. In terms of processing, methylated by PrmB.

Functionally, one of the primary rRNA binding proteins, it binds directly near the 3'-end of the 23S rRNA, where it nucleates assembly of the 50S subunit. This is Large ribosomal subunit protein uL3 from Polaromonas naphthalenivorans (strain CJ2).